The chain runs to 138 residues: Large ribosomal subunit protein uL13 (138 aa).

The protein belongs to the universal ribosomal protein uL13 family. Part of the 50S ribosomal subunit.

Functionally, this protein is one of the early assembly proteins of the 50S ribosomal subunit, although it is not seen to bind rRNA by itself. It is important during the early stages of 50S assembly. The chain is Large ribosomal subunit protein uL13 from Picrophilus torridus (strain ATCC 700027 / DSM 9790 / JCM 10055 / NBRC 100828 / KAW 2/3).